A 387-amino-acid chain; its full sequence is Probable serine/threonine-protein kinase PBL18 (387 aa).

The tract at residues 1-37 (MGNCLDSSARVGNRESTFGGSSRISRKPNQSSRLSSL) is disordered. Gly-2 is lipidated: N-myristoyl glycine. Cys-4 is lipidated: S-palmitoyl cysteine. Residues 14 to 37 (RESTFGGSSRISRKPNQSSRLSSL) show a composition bias toward polar residues. Position 73 is a phosphothreonine (Thr-73). One can recognise a Protein kinase domain in the interval 84–365 (FKPNSMIGEG…ADVLSTLQQL (282 aa)). Residues 90-98 (IGEGGFGCV) and Lys-122 each bind ATP. Tyr-167 is modified (phosphotyrosine). Asp-215 serves as the catalytic Proton acceptor. Position 219 is a phosphoserine (Ser-219). Phosphothreonine is present on residues Thr-250 and Thr-255. Tyr-263 bears the Phosphotyrosine mark. The segment at 368–387 (SSKKMGSTQNIVMSPSSHMS) is disordered.

The protein belongs to the protein kinase superfamily. Ser/Thr protein kinase family.

The protein resides in the cell membrane. It carries out the reaction L-seryl-[protein] + ATP = O-phospho-L-seryl-[protein] + ADP + H(+). The enzyme catalyses L-threonyl-[protein] + ATP = O-phospho-L-threonyl-[protein] + ADP + H(+). In terms of biological role, may be involved in plant defense signaling. The polypeptide is Probable serine/threonine-protein kinase PBL18 (Arabidopsis thaliana (Mouse-ear cress)).